The primary structure comprises 399 residues: Argininosuccinate synthase (399 aa).

Residues 10-18 and A38 each bind ATP; that span reads AYSGGVDTS. Residue Y89 coordinates L-citrulline. G119 provides a ligand contact to ATP. L-aspartate is bound by residues T121, N125, and D126. N125 contributes to the L-citrulline binding site. Residues R129, S177, S186, E262, and Y274 each contribute to the L-citrulline site.

This sequence belongs to the argininosuccinate synthase family. Type 1 subfamily. As to quaternary structure, homotetramer.

Its subcellular location is the cytoplasm. The enzyme catalyses L-citrulline + L-aspartate + ATP = 2-(N(omega)-L-arginino)succinate + AMP + diphosphate + H(+). Its pathway is amino-acid biosynthesis; L-arginine biosynthesis; L-arginine from L-ornithine and carbamoyl phosphate: step 2/3. The protein is Argininosuccinate synthase of Rippkaea orientalis (strain PCC 8801 / RF-1) (Cyanothece sp. (strain PCC 8801)).